Consider the following 50-residue polypeptide: Large ribosomal subunit protein bL33 (50 aa).

It belongs to the bacterial ribosomal protein bL33 family.

This chain is Large ribosomal subunit protein bL33, found in Citrifermentans bemidjiense (strain ATCC BAA-1014 / DSM 16622 / JCM 12645 / Bem) (Geobacter bemidjiensis).